Reading from the N-terminus, the 367-residue chain is Phosphoribosylaminoimidazole-succinocarboxamide synthase (367 aa).

Belongs to the SAICAR synthetase family.

It catalyses the reaction 5-amino-1-(5-phospho-D-ribosyl)imidazole-4-carboxylate + L-aspartate + ATP = (2S)-2-[5-amino-1-(5-phospho-beta-D-ribosyl)imidazole-4-carboxamido]succinate + ADP + phosphate + 2 H(+). The protein operates within purine metabolism; IMP biosynthesis via de novo pathway; 5-amino-1-(5-phospho-D-ribosyl)imidazole-4-carboxamide from 5-amino-1-(5-phospho-D-ribosyl)imidazole-4-carboxylate: step 1/2. The polypeptide is Phosphoribosylaminoimidazole-succinocarboxamide synthase (Aliivibrio fischeri (strain MJ11) (Vibrio fischeri)).